The primary structure comprises 178 residues: N-alpha-acetyltransferase 20 (178 aa).

In terms of domain architecture, N-acetyltransferase spans 2-157; sequence TSLRPFTCDD…DAYDMRKALS (156 aa). Positions 159–178 are disordered; it reads DTEKKSIVPLPHPVRPEDIE.

This sequence belongs to the acetyltransferase family. ARD1 subfamily. Component of the N-terminal acetyltransferase B (NatB) complex which is composed of naa20 and naa25.

The protein localises to the cytoplasm. Its subcellular location is the nucleus. The enzyme catalyses N-terminal L-methionyl-L-asparaginyl-[protein] + acetyl-CoA = N-terminal N(alpha)-acetyl-L-methionyl-L-asparaginyl-[protein] + CoA + H(+). It catalyses the reaction N-terminal L-methionyl-L-glutaminyl-[protein] + acetyl-CoA = N-terminal N(alpha)-acetyl-L-methionyl-L-glutaminyl-[protein] + CoA + H(+). It carries out the reaction N-terminal L-methionyl-L-aspartyl-[protein] + acetyl-CoA = N-terminal N(alpha)-acetyl-L-methionyl-L-aspartyl-[protein] + CoA + H(+). The catalysed reaction is N-terminal L-methionyl-L-glutamyl-[protein] + acetyl-CoA = N-terminal N(alpha)-acetyl-L-methionyl-L-glutamyl-[protein] + CoA + H(+). Functionally, catalytic subunit of the NatB complex which catalyzes acetylation of the N-terminal methionine residues of peptides beginning with Met-Asp, Met-Glu, Met-Asn and Met-Gln. Proteins with cell cycle functions are overrepresented in the pool of NatB substrates. Required for maintaining the structure and function of actomyosin fibers and for proper cellular migration. This is N-alpha-acetyltransferase 20 (naa20) from Xenopus tropicalis (Western clawed frog).